Here is a 2297-residue protein sequence, read N- to C-terminus: Xin actin-binding repeat-containing protein 1 (2297 aa).

A compositionally biased stretch (basic and acidic residues) spans 1–11 (MAEVAKQKKAT). Positions 1-28 (MAEVAKQKKATEAVCGDEDFPPPPPPLP) are disordered. Xin repeat units follow at residues 104-119 (GEVQ…WTLD), 139-154 (GDVK…STFD), 169-184 (GDVR…QPLD), 208-223 (GDVT…KPLD), 248-263 (GDVK…DPCC), 286-301 (SDFK…QPLD), 323-338 (GGVD…QPLD), 362-377 (ADVH…QPLS), and 396-411 (GNVG…QPMD). Residues 433-442 (GEVQDKRMQF) are compositionally biased toward basic and acidic residues. Positions 433–461 (GEVQDKRMQFEKSTAGKTAGDSGNKVQND) are disordered. Xin repeat units follow at residues 464–479 (GDVK…LPLN), 494–509 (GDVK…TPLY), 532–547 (GNVQ…RPLD), 570–585 (DDTR…QPLD), 605–620 (SNVK…KPMD), 638–653 (ADVK…QPLD), 677–692 (VNVK…EPLD), 715–730 (GDVS…KSLG), 747–762 (GSVH…QPIG), 779–794 (GDVG…LSLD), 818–833 (VNVK…QPLY), 856–871 (GDVR…KPLD), 893–908 (GDVK…QPLD), and 928–943 (KCVQ…EQAS). At serine 952 the chain carries Phosphoserine. 3 Xin repeats span residues 959-974 (GDVR…QPID), 997-1012 (GDVK…QSLD), and 1033-1048 (ADVK…TPLD). Disordered stretches follow at residues 1617–1680 (PSSH…KDQK), 1866–1900 (KENI…VPSI), 2147–2191 (SAAR…PRRK), and 2243–2297 (ELSS…TEKH). Low complexity-rich tracts occupy residues 1618–1630 (SSHT…VSVT) and 1644–1656 (SVSS…KNSS). 2 stretches are compositionally biased toward basic and acidic residues: residues 1876 to 1885 (SNKDELHFTS) and 2151 to 2162 (KPAESPTDKPKT). A compositionally biased stretch (low complexity) spans 2166–2180 (QSNAGSSSSQNSSAS). Over residues 2259–2278 (GMTSPVLQRSGQSFSSNSLS) the composition is skewed to polar residues.

This sequence belongs to the Xin family. Expressed at intercalated disks in the heart (at protein level).

It is found in the cell junction. It localises to the adherens junction. The protein resides in the desmosome. In terms of biological role, positively regulates organization of the outer plexiform layer and Muller glia cells in the retina. May protect actin filaments from depolymerization. May play a role in development of normal skeletal muscle morphology and muscle fiber type composition. The sequence is that of Xin actin-binding repeat-containing protein 1 from Danio rerio (Zebrafish).